Reading from the N-terminus, the 722-residue chain is Polyribonucleotide nucleotidyltransferase (722 aa).

Mg(2+) contacts are provided by D495 and D501. The region spanning 562-621 (PRLLSFRIDPELIGTVIGPGGRTIKGITERTNTKIDIEDGGIVTIASHDGAAAEEAQRII) is the KH domain. The S1 motif domain maps to 631 to 699 (GEIFPGSITR…NRGRINLTLR (69 aa)). The disordered stretch occupies residues 700–722 (GVSQNGGMSNYPEPTPTPVAPLT). The segment covering 712-722 (EPTPTPVAPLT) has biased composition (pro residues).

The protein belongs to the polyribonucleotide nucleotidyltransferase family. Mg(2+) is required as a cofactor.

It is found in the cytoplasm. The catalysed reaction is RNA(n+1) + phosphate = RNA(n) + a ribonucleoside 5'-diphosphate. Its function is as follows. Involved in mRNA degradation. Catalyzes the phosphorolysis of single-stranded polyribonucleotides processively in the 3'- to 5'-direction. This is Polyribonucleotide nucleotidyltransferase from Prochlorococcus marinus (strain NATL1A).